The following is a 139-amino-acid chain: Large ribosomal subunit protein bL17 (139 aa).

It belongs to the bacterial ribosomal protein bL17 family. Part of the 50S ribosomal subunit. Contacts protein L32.

The protein is Large ribosomal subunit protein bL17 of Myxococcus xanthus (strain DK1622).